Consider the following 437-residue polypeptide: MKPLIALVGRPNVGKSTLFNRILRQKSAIVDSTPGVTRDRHIMPGEWQGKQFLLMDTGGYCAANDVISSSMIEQTLTAIRDADCVIFLTDVRSGLTYDDLEISKLLQRTFQNKQIFFAVNKVESPQLTIDAESFVSTGFTRPYFLSAKDGSGVADMLDDILESLPESEHTDDDEDTSVKLAVVGRPNVGKSSFVNALLGTNRHIVSDIPGTTRDAIDSRFIRKQQEYVLIDTAGLRKRTKIDAGVEFYSSLRTEKAIERCQVAVVLLDARAGLEKQDLKIINMAEERKKGVLLLVNKWDLIEKDSKTSKIYEDDLRSHMGNLSWIPVLFISALTKKNLYRAIDTAEEISRNRSRKISTSSLNRFLEEALSAVHPSTKSGKELKIKYMTQIDSHWPVFAFFCNNPELVQSNFRKFLEKKLREQFQLDGVPISLRFMEK.

2 consecutive EngA-type G domains span residues 3-168 and 178-353; these read PLIA…PESE and VKLA…RNRS. GTP-binding positions include 9-16, 56-60, 120-123, 184-191, 231-235, and 296-299; these read GRPNVGKS, DTGGY, NKVE, DTAGL, and NKWD. The KH-like domain occupies 354 to 437; that stretch reads RKISTSSLNR…VPISLRFMEK (84 aa).

The protein belongs to the TRAFAC class TrmE-Era-EngA-EngB-Septin-like GTPase superfamily. EngA (Der) GTPase family. As to quaternary structure, associates with the 50S ribosomal subunit.

Its function is as follows. GTPase that plays an essential role in the late steps of ribosome biogenesis. In Chlorobium limicola (strain DSM 245 / NBRC 103803 / 6330), this protein is GTPase Der.